Consider the following 115-residue polypeptide: Large ribosomal subunit protein bL19 (115 aa).

The protein belongs to the bacterial ribosomal protein bL19 family.

Functionally, this protein is located at the 30S-50S ribosomal subunit interface and may play a role in the structure and function of the aminoacyl-tRNA binding site. The protein is Large ribosomal subunit protein bL19 of Desulforamulus reducens (strain ATCC BAA-1160 / DSM 100696 / MI-1) (Desulfotomaculum reducens).